Reading from the N-terminus, the 241-residue chain is Octanoyltransferase (241 aa).

The BPL/LPL catalytic domain maps to 38-227 (AGGPDTLLLL…AVCNALDGAL (190 aa)). Substrate-binding positions include 85-92 (RGGKITWH), 157-159 (AIG), and 170-172 (GFA). The active-site Acyl-thioester intermediate is Cys-188.

Belongs to the LipB family.

It is found in the cytoplasm. The enzyme catalyses octanoyl-[ACP] + L-lysyl-[protein] = N(6)-octanoyl-L-lysyl-[protein] + holo-[ACP] + H(+). Its pathway is protein modification; protein lipoylation via endogenous pathway; protein N(6)-(lipoyl)lysine from octanoyl-[acyl-carrier-protein]: step 1/2. Its function is as follows. Catalyzes the transfer of endogenously produced octanoic acid from octanoyl-acyl-carrier-protein onto the lipoyl domains of lipoate-dependent enzymes. Lipoyl-ACP can also act as a substrate although octanoyl-ACP is likely to be the physiological substrate. The chain is Octanoyltransferase from Mycobacterium marinum (strain ATCC BAA-535 / M).